The chain runs to 140 residues: MNRLLLAGWIFFILLSVCTESFSGMVVSQTVAFHFQPHPDLSQFLVMDFTELTVPEAFIQKIGHAFSFFVLTYLLWKQRGSIRSAAAGSFAFAFFTEVLQLFFSRNGCIRDVLIDAVGIGLFYGLYVLAKRRKQEMYEKY.

Helical transmembrane passes span 4-24 (LLLA…SFSG), 56-76 (EAFI…YLLW), 84-104 (SAAA…LFFS), and 109-129 (IRDV…YVLA).

The protein resides in the cell membrane. In terms of biological role, may be important for peptidoglycan remodeling. This is an uncharacterized protein from Bacillus subtilis (strain 168).